The primary structure comprises 299 residues: Oxygen-dependent coproporphyrinogen-III oxidase (299 aa).

Serine 92 contacts substrate. 2 residues coordinate Mn(2+): histidine 96 and histidine 106. The active-site Proton donor is histidine 106. 108 to 110 (NVR) provides a ligand contact to substrate. Mn(2+) is bound by residues histidine 145 and histidine 175. The segment at 240–275 (YVEFNLVWDRGTLFGLQTGGRTESILMSMPPLVRWE) is important for dimerization. Substrate is bound at residue 258 to 260 (GGR).

This sequence belongs to the aerobic coproporphyrinogen-III oxidase family. Homodimer. It depends on Mn(2+) as a cofactor.

The protein resides in the cytoplasm. The enzyme catalyses coproporphyrinogen III + O2 + 2 H(+) = protoporphyrinogen IX + 2 CO2 + 2 H2O. Its pathway is porphyrin-containing compound metabolism; protoporphyrin-IX biosynthesis; protoporphyrinogen-IX from coproporphyrinogen-III (O2 route): step 1/1. In terms of biological role, involved in the heme biosynthesis. Catalyzes the aerobic oxidative decarboxylation of propionate groups of rings A and B of coproporphyrinogen-III to yield the vinyl groups in protoporphyrinogen-IX. This Escherichia coli (strain SE11) protein is Oxygen-dependent coproporphyrinogen-III oxidase.